A 74-amino-acid polypeptide reads, in one-letter code: NADH dehydrogenase [ubiquinone] 1 alpha subcomplex assembly factor 8 (74 aa).

Residues 22-69 form the CHCH domain; that stretch reads LAACGAEASAYGKCVQASTAPGGRLSKDLCVREFEALRSCFAAAAKKT. Short sequence motifs (cx9C motif) lie at residues 25–35 and 51–61; these read CGAEASAYGKC and CVREFEALRSC. 2 disulfide bridges follow: Cys25/Cys61 and Cys35/Cys51.

As to quaternary structure, interacts with NDUFAF5.

The protein resides in the mitochondrion. Functionally, involved in the assembly of mitochondrial NADH:ubiquinone oxidoreductase complex (complex I, MT-ND1). Required to stabilize NDUFAF5. The polypeptide is NADH dehydrogenase [ubiquinone] 1 alpha subcomplex assembly factor 8 (Mus musculus (Mouse)).